A 277-amino-acid chain; its full sequence is Exosome complex component Rrp42 (277 aa).

The protein belongs to the RNase PH family. Rrp42 subfamily. As to quaternary structure, component of the archaeal exosome complex. Forms a hexameric ring-like arrangement composed of 3 Rrp41-Rrp42 heterodimers. The hexameric ring associates with a trimer of Rrp4 and/or Csl4 subunits.

The protein localises to the cytoplasm. Non-catalytic component of the exosome, which is a complex involved in RNA degradation. Contributes to the structuring of the Rrp41 active site. This chain is Exosome complex component Rrp42, found in Pyrococcus furiosus (strain ATCC 43587 / DSM 3638 / JCM 8422 / Vc1).